The following is a 591-amino-acid chain: MPQSRTHSRTATKHIFVSGGVASSLGKGLTASSLGQLLTARGMRVTMQKLDPYLNVDPGTMNPFQHGEVFVTDDGAETDLDVGHYERFLDRDLSGQANVTTGQVYSTVIAKERRGEYLGDTVQVIPHITDEIKSRILAMSGPDLQGHQPDVVITEIGGTVGDIESQPFLEAARQVRHDVGRDNVFFLHVSLVPYLAPSGELKTKPTQHSVAALRNIGIQPDALILRCDREVPPALKNKIALMCDVDVDGCISTPDAPSIYDIPKVLHSEGLDAYVVRQLGLPFRDVDWTVWGNLLERVHQPRETVRIALVGKYVDLPDAYLSVTEALRAGGFANRSKVEISWVPSDACETEAGAQAALGDVDGVLIPGGFGIRGIEGKLGAIRYARHRKIPLLGLCLGLQCVVIEAARSVGLDDANSAEFEPETTHPVISTMADQEDVIAGEADLGGTMRLGAYPAVLTKGSVVARAYGSEEVSERHRHRYEVNNAYRDRIAKSGLRFSGTSPDGHLVEFVEYPADQHPFFVATQAHPELKSRPTRPHPLFAAFVDAALKHKLEERLPVDVHGEERAAVATDDELADSADRDEVASVDSAG.

Residues 1-281 (MPQSRTHSRT…DAYVVRQLGL (281 aa)) are amidoligase domain. CTP is bound at residue serine 23. Serine 23 is a UTP binding site. ATP-binding positions include 24 to 29 (SLGKGL) and aspartate 81. Aspartate 81 and glutamate 155 together coordinate Mg(2+). CTP contacts are provided by residues 162-164 (DIE), 202-207 (KTKPTQ), and lysine 238. Residues 202-207 (KTKPTQ) and lysine 238 contribute to the UTP site. In terms of domain architecture, Glutamine amidotransferase type-1 spans 306–554 (RIALVGKYVD…VDAALKHKLE (249 aa)). Glycine 369 is a binding site for L-glutamine. Catalysis depends on cysteine 396, which acts as the Nucleophile; for glutamine hydrolysis. L-glutamine-binding positions include 397 to 400 (LGLQ), glutamate 419, and arginine 480. Catalysis depends on residues histidine 527 and glutamate 529. Positions 568–591 (AVATDDELADSADRDEVASVDSAG) are disordered.

Belongs to the CTP synthase family. Homotetramer.

It catalyses the reaction UTP + L-glutamine + ATP + H2O = CTP + L-glutamate + ADP + phosphate + 2 H(+). The catalysed reaction is L-glutamine + H2O = L-glutamate + NH4(+). It carries out the reaction UTP + NH4(+) + ATP = CTP + ADP + phosphate + 2 H(+). The protein operates within pyrimidine metabolism; CTP biosynthesis via de novo pathway; CTP from UDP: step 2/2. Its activity is regulated as follows. Allosterically activated by GTP, when glutamine is the substrate; GTP has no effect on the reaction when ammonia is the substrate. The allosteric effector GTP functions by stabilizing the protein conformation that binds the tetrahedral intermediate(s) formed during glutamine hydrolysis. Inhibited by the product CTP, via allosteric rather than competitive inhibition. In terms of biological role, catalyzes the ATP-dependent amination of UTP to CTP with either L-glutamine or ammonia as the source of nitrogen. Regulates intracellular CTP levels through interactions with the four ribonucleotide triphosphates. The chain is CTP synthase from Rhodococcus jostii (strain RHA1).